Consider the following 461-residue polypeptide: Cysteine--tRNA ligase (461 aa).

Cys-28 contributes to the Zn(2+) binding site. The short motif at 30-40 (ITVYDLCHIGH) is the 'HIGH' region element. Zn(2+)-binding residues include Cys-209, His-234, and Glu-238. Positions 266-270 (KMSKS) match the 'KMSKS' region motif. Residue Lys-269 participates in ATP binding.

The protein belongs to the class-I aminoacyl-tRNA synthetase family. In terms of assembly, monomer. The cofactor is Zn(2+).

The protein localises to the cytoplasm. The enzyme catalyses tRNA(Cys) + L-cysteine + ATP = L-cysteinyl-tRNA(Cys) + AMP + diphosphate. The chain is Cysteine--tRNA ligase from Escherichia coli O157:H7.